The chain runs to 91 residues: Large ribosomal subunit protein uL23 (91 aa).

It belongs to the universal ribosomal protein uL23 family. Part of the 50S ribosomal subunit. Contacts protein L29.

Binds to 23S rRNA. One of the proteins that surrounds the polypeptide exit tunnel on the outside of the ribosome. This chain is Large ribosomal subunit protein uL23, found in Staphylothermus marinus (strain ATCC 43588 / DSM 3639 / JCM 9404 / F1).